A 99-amino-acid chain; its full sequence is Ferredoxin, heterocyst (99 aa).

Residues 4–96 (YQVRLINKKE…NCTIKTHQEP (93 aa)) form the 2Fe-2S ferredoxin-type domain. The [2Fe-2S] cluster site is built by Cys42, Cys47, Cys50, and Cys80.

Belongs to the 2Fe2S plant-type ferredoxin family. [2Fe-2S] cluster is required as a cofactor.

In terms of biological role, ferredoxins are iron-sulfur proteins that transfer electrons in a wide variety of metabolic reactions. The sequence is that of Ferredoxin, heterocyst (fdxH) from Microchaete diplosiphon (Fremyella diplosiphon).